Reading from the N-terminus, the 315-residue chain is Homeobox-leucine zipper protein HAT3 (315 aa).

Residues 140 to 163 are disordered; the sequence is SCSLGGGSDDEDGSGNGDDSSRKK. The segment at residues 159–218 is a DNA-binding region (homeobox); sequence SSRKKLRLSKEQALVLEETFKEHSTLNPKQKMALAKQLNLRTRQVEVWFQNRRARTKLKQ. The leucine-zipper stretch occupies residues 226–247; it reads LKRCCENLTDENRRLQKEVSEL. The span at 280–305 shows a compositional bias: low complexity; sequence SSSSVAPPVMNSSSPMGPMSPWAAMP. The tract at residues 280-315 is disordered; it reads SSSSVAPPVMNSSSPMGPMSPWAAMPLRQRPAAGSH.

This sequence belongs to the HD-ZIP homeobox family. Class II subfamily.

It localises to the nucleus. Functionally, probable transcription factor. This is Homeobox-leucine zipper protein HAT3 (HAT3) from Arabidopsis thaliana (Mouse-ear cress).